The chain runs to 485 residues: Aspartyl/glutamyl-tRNA(Asn/Gln) amidotransferase subunit B (485 aa).

This sequence belongs to the GatB/GatE family. GatB subfamily. As to quaternary structure, heterotrimer of A, B and C subunits.

The enzyme catalyses L-glutamyl-tRNA(Gln) + L-glutamine + ATP + H2O = L-glutaminyl-tRNA(Gln) + L-glutamate + ADP + phosphate + H(+). It carries out the reaction L-aspartyl-tRNA(Asn) + L-glutamine + ATP + H2O = L-asparaginyl-tRNA(Asn) + L-glutamate + ADP + phosphate + 2 H(+). In terms of biological role, allows the formation of correctly charged Asn-tRNA(Asn) or Gln-tRNA(Gln) through the transamidation of misacylated Asp-tRNA(Asn) or Glu-tRNA(Gln) in organisms which lack either or both of asparaginyl-tRNA or glutaminyl-tRNA synthetases. The reaction takes place in the presence of glutamine and ATP through an activated phospho-Asp-tRNA(Asn) or phospho-Glu-tRNA(Gln). The protein is Aspartyl/glutamyl-tRNA(Asn/Gln) amidotransferase subunit B of Bordetella avium (strain 197N).